Here is a 429-residue protein sequence, read N- to C-terminus: Glutamate-1-semialdehyde 2,1-aminomutase (429 aa).

Residue Lys265 is modified to N6-(pyridoxal phosphate)lysine.

The protein belongs to the class-III pyridoxal-phosphate-dependent aminotransferase family. HemL subfamily. In terms of assembly, homodimer. It depends on pyridoxal 5'-phosphate as a cofactor.

It is found in the cytoplasm. It carries out the reaction (S)-4-amino-5-oxopentanoate = 5-aminolevulinate. The protein operates within porphyrin-containing compound metabolism; protoporphyrin-IX biosynthesis; 5-aminolevulinate from L-glutamyl-tRNA(Glu): step 2/2. The chain is Glutamate-1-semialdehyde 2,1-aminomutase from Chromohalobacter salexigens (strain ATCC BAA-138 / DSM 3043 / CIP 106854 / NCIMB 13768 / 1H11).